We begin with the raw amino-acid sequence, 332 residues long: Transcription initiation factor IIB 2 (332 aa).

Residues 1-10 (MSDTITTRTY) show a composition bias toward polar residues. Residues 1 to 36 (MSDTITTRTYSADAKSRDVRPRESERDETQQDETQV) are disordered. Over residues 14–29 (AKSRDVRPRESERDET) the composition is skewed to basic and acidic residues. The TFIIB-type zinc finger occupies 33–63 (ETQVCPECSGHLVTDEEHGETICEDCGLVVE). Zn(2+) contacts are provided by Cys37, Cys40, Cys55, and Cys58. The tract at residues 77 to 106 (DSAERDSKSRVGAPTTKMMHDKGLSTNIGW) is disordered. A run of 2 repeats spans residues 149-232 (GEID…VREL) and 243-324 (QYVP…ELLE).

The protein belongs to the TFIIB family.

In terms of biological role, stabilizes TBP binding to an archaeal box-A promoter. Also responsible for recruiting RNA polymerase II to the pre-initiation complex (DNA-TBP-TFIIB). The sequence is that of Transcription initiation factor IIB 2 from Haloferax volcanii (strain ATCC 29605 / DSM 3757 / JCM 8879 / NBRC 14742 / NCIMB 2012 / VKM B-1768 / DS2) (Halobacterium volcanii).